We begin with the raw amino-acid sequence, 162 residues long: Nucleotide-binding protein SCO4614 (162 aa).

Belongs to the YajQ family.

It is found in the cytoplasm. It localises to the nucleoid. Its function is as follows. Nucleotide-binding protein. This Streptomyces coelicolor (strain ATCC BAA-471 / A3(2) / M145) protein is Nucleotide-binding protein SCO4614.